A 196-amino-acid chain; its full sequence is Imidazole glycerol phosphate synthase subunit HisH (196 aa).

Residues 2–196 (NVVILDTGCA…AQLLKNFLEM (195 aa)) form the Glutamine amidotransferase type-1 domain. Cys-77 serves as the catalytic Nucleophile. Residues His-178 and Glu-180 contribute to the active site.

Heterodimer of HisH and HisF.

It localises to the cytoplasm. The catalysed reaction is 5-[(5-phospho-1-deoxy-D-ribulos-1-ylimino)methylamino]-1-(5-phospho-beta-D-ribosyl)imidazole-4-carboxamide + L-glutamine = D-erythro-1-(imidazol-4-yl)glycerol 3-phosphate + 5-amino-1-(5-phospho-beta-D-ribosyl)imidazole-4-carboxamide + L-glutamate + H(+). The enzyme catalyses L-glutamine + H2O = L-glutamate + NH4(+). The protein operates within amino-acid biosynthesis; L-histidine biosynthesis; L-histidine from 5-phospho-alpha-D-ribose 1-diphosphate: step 5/9. Functionally, IGPS catalyzes the conversion of PRFAR and glutamine to IGP, AICAR and glutamate. The HisH subunit catalyzes the hydrolysis of glutamine to glutamate and ammonia as part of the synthesis of IGP and AICAR. The resulting ammonia molecule is channeled to the active site of HisF. This is Imidazole glycerol phosphate synthase subunit HisH from Salmonella choleraesuis (strain SC-B67).